The primary structure comprises 223 residues: DNA mismatch repair protein MutH (223 aa).

Belongs to the MutH family.

The protein resides in the cytoplasm. Its function is as follows. Sequence-specific endonuclease that cleaves unmethylated GATC sequences. It is involved in DNA mismatch repair. The polypeptide is DNA mismatch repair protein MutH (Shewanella baltica (strain OS223)).